We begin with the raw amino-acid sequence, 396 residues long: MIISAASDYRAAAQRTLPPFLFHYIDGGAYAEYTLRRNVEDLSQVALRQRVLKNMSDLSLETTLFNETLSMPVALAPVGLCGMYARRGEVQAAAAADAKGIPFTLSTVSVCPIEEVAPTIKRPMWFQLYVLRDRGFMRNALERAKAAGCSTLVFTVDMPTPGARYRDAHSGMSGPNAAMRRYWQAVMHPKWAWDVGLNGRPHDLGNISAYLGKPTGLEDYIGWLANNFDPSISWKDLEWIREFWDGPMVIKGILDPEDARDAVRFGADGIVVSNHGGRQLDGVLSSARALPAIADAVKGDIAILADSGIRNGLDVVRMIALGADTVLLGRAYLYALATAGKAGVANLLDLIEKEMKVAMTLTGAKSISEISGDSLVQELGKSLPAALAPMSKGDAA.

The FMN hydroxy acid dehydrogenase domain maps to 1–380 (MIISAASDYR…SGDSLVQELG (380 aa)). Residue Tyr-24 coordinates substrate. 2 residues coordinate FMN: Ser-106 and Gln-127. Tyr-129 is a binding site for substrate. Thr-155 contributes to the FMN binding site. Position 164 (Arg-164) interacts with substrate. Lys-251 lines the FMN pocket. The active-site Proton acceptor is the His-275. A substrate-binding site is contributed by Arg-278. Residue 306 to 330 (DSGIRNGLDVVRMIALGADTVLLGR) participates in FMN binding.

Belongs to the FMN-dependent alpha-hydroxy acid dehydrogenase family. Requires FMN as cofactor.

It is found in the cell inner membrane. The catalysed reaction is (S)-lactate + A = pyruvate + AH2. Catalyzes the conversion of L-lactate to pyruvate. Is coupled to the respiratory chain. The chain is L-lactate dehydrogenase from Salmonella typhimurium (strain LT2 / SGSC1412 / ATCC 700720).